The following is a 303-amino-acid chain: Zinc transporter ZIP9-A (303 aa).

Residues 7-27 (ISLLSLAMLVGCYVSGIIPLA) traverse the membrane as a helical segment. Asn29 carries an N-linked (GlcNAc...) asparagine glycan. 5 helical membrane-spanning segments follow: residues 35 to 55 (LKLVTVLGAGLLCGTALAVII), 102 to 122 (AYIGVSLVLGFVFMLLVDQIG), 142 to 162 (ITTTLGLVVHAAADGVALGAA), 172 to 192 (LIVFVAIMLHKAPAAFGLVSF), and 206 to 226 (HLLVFALAAPVLSMLTYLGLS). Asn237 carries an N-linked (GlcNAc...) asparagine glycan. 2 helical membrane passes run 240-260 (GVAMLFSAGTFLYVATVHVLP) and 282-302 (LEVCALVLGCLIPLVLSIGHQ).

Belongs to the ZIP transporter (TC 2.A.5) family.

It localises to the golgi apparatus. The protein resides in the trans-Golgi network membrane. Its subcellular location is the cell membrane. The protein localises to the cytoplasm. It is found in the perinuclear region. It localises to the mitochondrion. The protein resides in the nucleus. The enzyme catalyses Zn(2+)(in) = Zn(2+)(out). Functionally, transports zinc ions across cell and organelle membranes into the cytoplasm and regulates intracellular zinc homeostasis. Participates in the zinc ions efflux out of the secretory compartments. Regulates intracellular zinc level, resulting in the enhancement of AKT1 and MAPK3/MAPK1 (Erk1/2) phosphorylation in response to the BCR activation. Also functions as a membrane androgen receptor that mediates, through a G protein, the non-classical androgen signaling pathway, characterized by the activation of MAPK3/MAPK1 (Erk1/2) and transcription factors CREB1 or ATF1. Moreover, has dual functions as a membrane-bound androgen receptor and as an androgen-dependent zinc transporter both of which are mediated through an inhibitory G protein (Gi) that mediates both MAP kinase and zinc signaling leading to the androgen-dependent apoptotic process. In Xenopus laevis (African clawed frog), this protein is Zinc transporter ZIP9-A (slc39a9-a).